A 92-amino-acid polypeptide reads, in one-letter code: MLCTVYKSTRKADTYLFVKKRDCFDDVPEALMAMFGTPQLVMVFPIAKRESLGMADIHKVRAAIDENGYYLQIPPPQVNLLAEHKRNLGLQD.

A YcgL domain is found at methionine 1 to lysine 85.

This is YcgL domain-containing protein Sputcn32_1766 from Shewanella putrefaciens (strain CN-32 / ATCC BAA-453).